Consider the following 721-residue polypeptide: Oviduct-specific glycoprotein (721 aa).

An N-terminal signal peptide occupies residues 1 to 21 (MGRLLLLAGLVLLMKHSDGTA). A GH18 domain is found at 22-385 (YKLVCYFTNW…HILNELLVQT (364 aa)). Cys26 and Cys51 are joined by a disulfide. Chitin contacts are provided by residues 71–72 (LQ), 98–101 (GGWN), Tyr142, 211–214 (LSYD), and Trp355. N-linked (GlcNAc...) asparagine glycosylation is found at Asn402 and Asn442. The segment covering 444–456 (TTVPSDGSVTPGG) has biased composition (polar residues). Positions 444–465 (TTVPSDGSVTPGGTASPRKHAV) are disordered. N-linked (GlcNAc...) asparagine glycosylation is present at Asn469. Tandem repeats lie at residues 486–492 (SKTTTGV), 493–499 (SKTTTGI), 500–506 (SKTTTGV), 507–513 (SKTTTGV), 514–520 (SKATAGI), 521–527 (SKTIPEI), 528–534 (SKATAGV), 535–541 (SKTTTGV), 542–548 (SKTTTGI), 549–555 (SKTITGV), 556–562 (SKTTTGI), 563–569 (SKTTTGI), 570–576 (SKTTTGV), 577–583 (SKITTGV), 584–590 (SKTTTGI), 591–597 (SKTTTGI), 598–604 (SQTTTGI), 605–611 (SKTTTDI), 612–618 (SKTTTGI), 619–625 (SKTTPGI), and 626–632 (SKTTPGM). The segment at 486-632 (SKTTTGVSKT…PGISKTTPGM (147 aa)) is 21 X 7 AA tandem repeats of S-K-[TAI]-[TI]-[TAP]-[GED]-[IVM].

The protein belongs to the glycosyl hydrolase 18 family. Epithelial cells of the oviduct.

The protein localises to the cytoplasmic vesicle. It localises to the secretory vesicle. Binds to oocyte zona pellucida in vivo. May play a role in the fertilization process and/or early embryonic development. The polypeptide is Oviduct-specific glycoprotein (Ovgp1) (Mus musculus (Mouse)).